We begin with the raw amino-acid sequence, 165 residues long: Small ribosomal subunit protein uS5 (165 aa).

An S5 DRBM domain is found at 13–76 (LEENVVSINR…EDAKRHLIKV (64 aa)).

This sequence belongs to the universal ribosomal protein uS5 family. As to quaternary structure, part of the 30S ribosomal subunit. Contacts proteins S4 and S8.

With S4 and S12 plays an important role in translational accuracy. Its function is as follows. Located at the back of the 30S subunit body where it stabilizes the conformation of the head with respect to the body. The polypeptide is Small ribosomal subunit protein uS5 (Oenococcus oeni (strain ATCC BAA-331 / PSU-1)).